The sequence spans 229 residues: Potassium/proton antiporter CemA (229 aa).

The next 3 membrane-spanning stretches (helical) occupy residues 7–27, 114–134, and 189–209; these read FTPLFYLSFIVFLPWWISFSF, LICFVILSGYSIWGNENLVIL, and ILSGLVSTFPVILDTILKYWI.

The protein belongs to the CemA family.

Its subcellular location is the plastid. It is found in the chloroplast inner membrane. It carries out the reaction K(+)(in) + H(+)(out) = K(+)(out) + H(+)(in). In terms of biological role, contributes to K(+)/H(+) antiport activity by supporting proton efflux to control proton extrusion and homeostasis in chloroplasts in a light-dependent manner to modulate photosynthesis. Prevents excessive induction of non-photochemical quenching (NPQ) under continuous-light conditions. Indirectly promotes efficient inorganic carbon uptake into chloroplasts. In Ipomoea purpurea (Common morning glory), this protein is Potassium/proton antiporter CemA.